Reading from the N-terminus, the 657-residue chain is tRNA 5-methylaminomethyl-2-thiouridine biosynthesis bifunctional protein MnmC (657 aa).

The segment at 1–233 (MPRGLILATP…KRDMTVAAFP (233 aa)) is tRNA (mnm(5)s(2)U34)-methyltransferase. The FAD-dependent cmnm(5)s(2)U34 oxidoreductase stretch occupies residues 256 to 657 (LGAGLAGCSV…RALRHGKHAA (402 aa)).

The protein in the N-terminal section; belongs to the methyltransferase superfamily. tRNA (mnm(5)s(2)U34)-methyltransferase family. This sequence in the C-terminal section; belongs to the DAO family. Requires FAD as cofactor.

The protein resides in the cytoplasm. The enzyme catalyses 5-aminomethyl-2-thiouridine(34) in tRNA + S-adenosyl-L-methionine = 5-methylaminomethyl-2-thiouridine(34) in tRNA + S-adenosyl-L-homocysteine + H(+). Functionally, catalyzes the last two steps in the biosynthesis of 5-methylaminomethyl-2-thiouridine (mnm(5)s(2)U) at the wobble position (U34) in tRNA. Catalyzes the FAD-dependent demodification of cmnm(5)s(2)U34 to nm(5)s(2)U34, followed by the transfer of a methyl group from S-adenosyl-L-methionine to nm(5)s(2)U34, to form mnm(5)s(2)U34. The sequence is that of tRNA 5-methylaminomethyl-2-thiouridine biosynthesis bifunctional protein MnmC from Ralstonia nicotianae (strain ATCC BAA-1114 / GMI1000) (Ralstonia solanacearum).